Reading from the N-terminus, the 930-residue chain is Isoleucine--tRNA ligase (930 aa).

Residues 57-67 (PYANGNIHVGH) carry the 'HIGH' region motif. E554 contributes to the L-isoleucyl-5'-AMP binding site. Residues 595–599 (KMSKS) carry the 'KMSKS' region motif. K598 is an ATP binding site. Zn(2+)-binding residues include C888, C891, C908, and C911.

Belongs to the class-I aminoacyl-tRNA synthetase family. IleS type 1 subfamily. In terms of assembly, monomer. It depends on Zn(2+) as a cofactor.

Its subcellular location is the cytoplasm. The catalysed reaction is tRNA(Ile) + L-isoleucine + ATP = L-isoleucyl-tRNA(Ile) + AMP + diphosphate. Its function is as follows. Catalyzes the attachment of isoleucine to tRNA(Ile). As IleRS can inadvertently accommodate and process structurally similar amino acids such as valine, to avoid such errors it has two additional distinct tRNA(Ile)-dependent editing activities. One activity is designated as 'pretransfer' editing and involves the hydrolysis of activated Val-AMP. The other activity is designated 'posttransfer' editing and involves deacylation of mischarged Val-tRNA(Ile). This is Isoleucine--tRNA ligase from Streptococcus pneumoniae (strain ATCC BAA-255 / R6).